A 281-amino-acid polypeptide reads, in one-letter code: Probable endonuclease 4 (281 aa).

Histidine 69, histidine 109, glutamate 145, aspartate 179, histidine 182, histidine 216, aspartate 229, histidine 231, and glutamate 261 together coordinate Zn(2+).

It belongs to the AP endonuclease 2 family. Zn(2+) is required as a cofactor.

It carries out the reaction Endonucleolytic cleavage to 5'-phosphooligonucleotide end-products.. Functionally, endonuclease IV plays a role in DNA repair. It cleaves phosphodiester bonds at apurinic or apyrimidinic (AP) sites, generating a 3'-hydroxyl group and a 5'-terminal sugar phosphate. This is Probable endonuclease 4 from Pectobacterium atrosepticum (strain SCRI 1043 / ATCC BAA-672) (Erwinia carotovora subsp. atroseptica).